The following is a 138-amino-acid chain: Odorant-binding protein 22 (138 aa).

Positions 1–16 are cleaved as a signal peptide; that stretch reads MKVFIAVFALIAVAAA. Arg-30 lines the (5Z,8Z,11Z,14Z)-eicosatetraenoate pocket. Residues Arg-30 and Tyr-61 each contribute to the (9Z)-hexadecenoate site. The (9Z,12Z)-octadecadienoate site is built by Arg-30 and Tyr-61. Disulfide bonds link Cys-33–Cys-64, Cys-60–Cys-113, and Cys-103–Cys-122. N-linked (GlcNAc...) asparagine glycosylation occurs at Asn-127.

The protein belongs to the PBP/GOBP family. Monomer in solution. As to expression, high-level expression in female mouth parts, particularly in the proboscis (at protein level). Moderate-level expression in female antenna (at protein level). Expressed in testis but not in the accessory gland or ejaculatory duct (at protein level). Expressed in spermathecae (at protein level). Female salivary gland. Female chemosensory organs: antenna, palp and proboscis. Not detected in midgut.

The protein resides in the secreted. Functionally, involved in modulation of blood-feeding behavior and capacity in female mosquitoes. Required for normal oviposition. Required for normal fecundity and fertility of female and male mosquitoes. Required for normal expression of VGA1 gene, which encodes the egg yolk protein vitellogenin-A1. Involved in regulation of spermatozoa development. Required for normal female longevity when mosquitoes are maintained on regular sugar meal. Binds long chain fatty acids. Its function is as follows. (Microbial infection) Facilitates shedding of dengue virus type 2 particles into mosquito saliva. Does not affect dengue virus type 2 replication or infection prevalence in midgut and salivary glands at 14 days after blood feeding. In terms of biological role, (Microbial infection) Facilitates shedding of Zika virus particles into mosquito saliva. Does not affect Zika virus replication or infection prevalence in midgut and salivary glands at 14 days after blood feeding. In Aedes aegypti (Yellowfever mosquito), this protein is Odorant-binding protein 22.